Consider the following 358-residue polypeptide: Ubiquitin thioesterase OTU1 (358 aa).

The region spanning 5–87 (FSVKLKSKKG…LIVEEKAGAA (83 aa)) is the Ubiquitin-like domain. Residues 8 to 94 (KLKSKKGQFI…GAAGPTSTPL (87 aa)) form a UBX-like region. The interval 83-108 (KAGAAGPTSTPLASGSGSSTMEDDEA) is disordered. Over residues 89–102 (PTSTPLASGSGSST) the composition is skewed to polar residues. The 125-residue stretch at 161–285 (LLKKVVPADN…GIHYDPLYME (125 aa)) folds into the OTU domain. The cys-loop stretch occupies residues 166 to 172 (VPADNSC). Residue D169 is part of the active site. C172 acts as the Nucleophile in catalysis. Residues 224–234 (IQKADSWGGAI) form a variable-loop region. Positions 274-278 (FDGIH) are his-loop. I277 serves as a coordination point for substrate. Residue H278 is part of the active site. The interval 301-306 (MGVYQQ) is S2 site. The C2H2-type zinc finger occupies 328 to 352 (LRCMDCDVMLVGQGQAQEHAKKTGH). H352 is a catalytic residue.

It carries out the reaction Thiol-dependent hydrolysis of ester, thioester, amide, peptide and isopeptide bonds formed by the C-terminal Gly of ubiquitin (a 76-residue protein attached to proteins as an intracellular targeting signal).. In terms of biological role, hydrolase that can remove conjugated ubiquitin from proteins and may therefore play an important regulatory role at the level of protein turnover by preventing degradation. The polypeptide is Ubiquitin thioesterase OTU1 (Drosophila pseudoobscura pseudoobscura (Fruit fly)).